A 428-amino-acid chain; its full sequence is Enolase (428 aa).

Gln163 provides a ligand contact to (2R)-2-phosphoglycerate. Residue Glu205 is the Proton donor of the active site. Mg(2+) contacts are provided by Asp242, Glu285, and Asp312. (2R)-2-phosphoglycerate-binding residues include Lys337, Arg366, Ser367, and Lys388. Residue Lys337 is the Proton acceptor of the active site.

This sequence belongs to the enolase family. Component of the RNA degradosome, a multiprotein complex involved in RNA processing and mRNA degradation. It depends on Mg(2+) as a cofactor.

It localises to the cytoplasm. The protein localises to the secreted. The protein resides in the cell surface. The catalysed reaction is (2R)-2-phosphoglycerate = phosphoenolpyruvate + H2O. The protein operates within carbohydrate degradation; glycolysis; pyruvate from D-glyceraldehyde 3-phosphate: step 4/5. Its function is as follows. Catalyzes the reversible conversion of 2-phosphoglycerate (2-PG) into phosphoenolpyruvate (PEP). It is essential for the degradation of carbohydrates via glycolysis. This is Enolase from Halorhodospira halophila (strain DSM 244 / SL1) (Ectothiorhodospira halophila (strain DSM 244 / SL1)).